A 709-amino-acid polypeptide reads, in one-letter code: Polyribonucleotide nucleotidyltransferase (709 aa).

2 residues coordinate Mg(2+): aspartate 489 and aspartate 495. In terms of domain architecture, KH spans proline 556 to isoleucine 615. The S1 motif domain maps to glycine 625–lysine 693.

The protein belongs to the polyribonucleotide nucleotidyltransferase family. The cofactor is Mg(2+).

Its subcellular location is the cytoplasm. It catalyses the reaction RNA(n+1) + phosphate = RNA(n) + a ribonucleoside 5'-diphosphate. Its function is as follows. Involved in mRNA degradation. Catalyzes the phosphorolysis of single-stranded polyribonucleotides processively in the 3'- to 5'-direction. The protein is Polyribonucleotide nucleotidyltransferase of Streptococcus agalactiae serotype Ia (strain ATCC 27591 / A909 / CDC SS700).